Reading from the N-terminus, the 203-residue chain is Large ribosomal subunit protein bL25 (203 aa).

The protein belongs to the bacterial ribosomal protein bL25 family. CTC subfamily. In terms of assembly, part of the 50S ribosomal subunit; part of the 5S rRNA/L5/L18/L25 subcomplex. Contacts the 5S rRNA. Binds to the 5S rRNA independently of L5 and L18.

In terms of biological role, this is one of the proteins that binds to the 5S RNA in the ribosome where it forms part of the central protuberance. The protein is Large ribosomal subunit protein bL25 of Paraburkholderia phymatum (strain DSM 17167 / CIP 108236 / LMG 21445 / STM815) (Burkholderia phymatum).